The following is a 472-amino-acid chain: Calcitonin gene-related peptide type 1 receptor (472 aa).

The N-terminal stretch at Met1–Ala28 is a signal peptide. The Extracellular segment spans residues Glu29–Leu149. Disulfide bonds link Cys58–Cys84, Cys75–Cys115, and Cys98–Cys137. 3 N-linked (GlcNAc...) asparagine glycosylation sites follow: Asn76, Asn128, and Asn133. The helical transmembrane segment at Asn150 to Phe174 threads the bilayer. The Cytoplasmic segment spans residues Tyr175 to Thr185. Residues Leu186 to Val208 form a helical membrane-spanning segment. Topologically, residues Ala209–Pro219 are extracellular. Residues Val220–His248 traverse the membrane as a helical segment. Residues Thr249 to Leu262 lie on the Cytoplasmic side of the membrane. Residues Met263–Ala283 traverse the membrane as a helical segment. Residues Arg284 to His299 lie on the Extracellular side of the membrane. The helical transmembrane segment at Leu300–Arg324 threads the bilayer. Topologically, residues Val325–Asn339 are cytoplasmic. The chain crosses the membrane as a helical span at residues Leu340–Leu361. Over Phe362–Asp376 the chain is Extracellular. Residues Tyr377–Phe397 traverse the membrane as a helical segment. At Asn398–Met472 the chain is on the cytoplasmic side.

It belongs to the G-protein coupled receptor 2 family.

Its subcellular location is the cell membrane. In terms of biological role, may function as G protein-coupled receptor for calcitonin-gene-related peptides and adrenomedullin. Specificity may be modulated by accessory proteins. May activate cAMP-dependent pathway. The chain is Calcitonin gene-related peptide type 1 receptor (calcrl) from Xenopus tropicalis (Western clawed frog).